A 615-amino-acid polypeptide reads, in one-letter code: Fibrinogen alpha chain (615 aa).

Positions 1-19 (MFSVRDLCLVLSLVGAIKT) are cleaved as a signal peptide. Positions 71–602 (CRMKGLIDEV…GHTKARPARG (532 aa)) form a coiled coil. The interval 267–427 (FGGDGHARGD…TKQEFHTGKL (161 aa)) is disordered. Polar residues predominate over residues 293 to 302 (GTSSIGNVNP). The O-linked (GalNAc...) threonine glycan is linked to Thr325. A compositionally biased stretch (low complexity) spans 373–396 (GSAGTWNTGSSGSSSFRPDSSGHG). The cysteines at positions 455 and 485 are disulfide-linked. The disordered stretch occupies residues 530–615 (EFAALGESGS…SPLGEPSLTP (86 aa)). The span at 537-549 (SGSSSSKTSTHSK) shows a compositional bias: low complexity. Polar residues predominate over residues 550–560 (QFVSSSTTVNR). Residues 591–601 (QKGHTKARPAR) are compositionally biased toward basic residues.

Heterohexamer; disulfide linked. Contains 2 sets of 3 non-identical chains (alpha, beta and gamma). The 2 heterotrimers are in head to head conformation with the N-termini in a small central domain. In terms of processing, conversion of fibrinogen to fibrin is triggered by thrombin, which cleaves fibrinopeptides A and B from alpha and beta chains, and thus exposes the N-terminal polymerization sites responsible for the formation of the soft clot. The soft clot is converted into the hard clot by factor XIIIA which catalyzes the epsilon-(gamma-glutamyl)lysine cross-linking between gamma chains (stronger) and between alpha chains (weaker) of different monomers. Post-translationally, forms F13A-mediated cross-links between a glutamine and the epsilon-amino group of a lysine residue, forming fibronectin-fibrinogen heteropolymers.

Its subcellular location is the secreted. In terms of biological role, cleaved by the protease thrombin to yield monomers which, together with fibrinogen beta (FGB) and fibrinogen gamma (FGG), polymerize to form an insoluble fibrin matrix. Fibrin has a major function in hemostasis as one of the primary components of blood clots. In addition, functions during the early stages of wound repair to stabilize the lesion and guide cell migration during re-epithelialization. Was originally thought to be essential for platelet aggregation, based on in vitro studies using anticoagulated blood. However, subsequent studies have shown that it is not absolutely required for thrombus formation in vivo. Enhances expression of SELP in activated platelets via an ITGB3-dependent pathway. Maternal fibrinogen is essential for successful pregnancy. Fibrin deposition is also associated with infection, where it protects against IFNG-mediated hemorrhage. May also facilitate the immune response via both innate and T-cell mediated pathways. This Bos taurus (Bovine) protein is Fibrinogen alpha chain (FGA).